The sequence spans 95 residues: Aspartyl/glutamyl-tRNA(Asn/Gln) amidotransferase subunit C (95 aa).

This sequence belongs to the GatC family. As to quaternary structure, heterotrimer of A, B and C subunits.

It catalyses the reaction L-glutamyl-tRNA(Gln) + L-glutamine + ATP + H2O = L-glutaminyl-tRNA(Gln) + L-glutamate + ADP + phosphate + H(+). It carries out the reaction L-aspartyl-tRNA(Asn) + L-glutamine + ATP + H2O = L-asparaginyl-tRNA(Asn) + L-glutamate + ADP + phosphate + 2 H(+). In terms of biological role, allows the formation of correctly charged Asn-tRNA(Asn) or Gln-tRNA(Gln) through the transamidation of misacylated Asp-tRNA(Asn) or Glu-tRNA(Gln) in organisms which lack either or both of asparaginyl-tRNA or glutaminyl-tRNA synthetases. The reaction takes place in the presence of glutamine and ATP through an activated phospho-Asp-tRNA(Asn) or phospho-Glu-tRNA(Gln). In Thioalkalivibrio sulfidiphilus (strain HL-EbGR7), this protein is Aspartyl/glutamyl-tRNA(Asn/Gln) amidotransferase subunit C.